The sequence spans 82 residues: Cell division topological specificity factor (82 aa).

Belongs to the MinE family.

Prevents the cell division inhibition by proteins MinC and MinD at internal division sites while permitting inhibition at polar sites. This ensures cell division at the proper site by restricting the formation of a division septum at the midpoint of the long axis of the cell. This chain is Cell division topological specificity factor, found in Hahella chejuensis (strain KCTC 2396).